The primary structure comprises 417 residues: Gap junction alpha-3 protein (417 aa).

An intramembrane segment occupies G2–Q15. Residues E16–T19 are Cytoplasmic-facing. Residues V20–A40 form a helical membrane-spanning segment. Residues A41–P71 are Extracellular-facing. 3 cysteine pairs are disulfide-bonded: C54–C198, C61–C192, and C65–C187. A helical membrane pass occupies residues I72–Y92. Topologically, residues L93–N158 are cytoplasmic. Residues E110–M128 show a composition bias toward basic and acidic residues. The segment at E110–D141 is disordered. The helical transmembrane segment at I159–F179 threads the bilayer. Residues Q180 to T207 lie on the Extracellular side of the membrane. The helical transmembrane segment at I208–I228 threads the bilayer. Residues Y229–I417 lie on the Cytoplasmic side of the membrane. Disordered regions lie at residues D247–P267 and R334–I417. Positions P342–P353 are enriched in low complexity.

It belongs to the connexin family. Alpha-type (group II) subfamily. A hemichannel or connexon is composed of a hexamer of connexins. A functional gap junction is formed by the apposition of two hemichannels. Forms heteromeric channels with GJA8.

It is found in the cell membrane. The protein localises to the cell junction. It localises to the gap junction. In terms of biological role, structural component of lens fiber gap junctions. Gap junctions are dodecameric channels that connect the cytoplasm of adjoining cells. They are formed by the docking of two hexameric hemichannels, one from each cell membrane. Small molecules and ions diffuse from one cell to a neighboring cell via the central pore. In Mus musculus (Mouse), this protein is Gap junction alpha-3 protein (Gja3).